The chain runs to 137 residues: Large ribosomal subunit protein uL16 (137 aa).

The protein belongs to the universal ribosomal protein uL16 family. As to quaternary structure, part of the 50S ribosomal subunit.

Binds 23S rRNA and is also seen to make contacts with the A and possibly P site tRNAs. This is Large ribosomal subunit protein uL16 from Bradyrhizobium sp. (strain ORS 278).